The sequence spans 289 residues: Syntaxin-3 (289 aa).

Residues 1–263 lie on the Cytoplasmic side of the membrane; that stretch reads MKDRLEQLKA…VKYQSQARKK (263 aa). Residues 32-111 adopt a coiled-coil conformation; it reads MDEFFSEIEE…IEEDEVRSSA (80 aa). A t-SNARE coiled-coil homology domain is found at 191 to 253; it reads LSEIEGRHKD…EKARDETKKA (63 aa). A helical; Anchor for type IV membrane protein transmembrane segment spans residues 264-284; sequence LIIIIVLVVVLLGILALIIGL. At 285 to 289 the chain is on the extracellular side; the sequence is SVGLN.

It belongs to the syntaxin family. As to quaternary structure, interacts with REEP6. Interacts with PRPH2 in rod and cone photoreceptors. Interacts with ROM1. Interacts with SNAP25. Interacts with VAMP2. In terms of assembly, interacts with IPO5. As to expression, expressed in small intestine, kidney, pancreas, placenta as well as in retina. Weaker expression in lung, liver and heart. Not expressed in brain and skeletal muscle. In terms of tissue distribution, expressed only in the retina. Ubiquitously expressed.

It localises to the apical cell membrane. The protein resides in the nucleus. Potentially involved in docking of synaptic vesicles at presynaptic active zones. Apical receptor involved in membrane fusion of apical vesicles. In terms of biological role, essential for survival of retinal photoreceetors. Its function is as follows. Functions as a regulator of gene expression. The polypeptide is Syntaxin-3 (STX3) (Homo sapiens (Human)).